A 327-amino-acid chain; its full sequence is Inactive peptidyl-prolyl cis-trans isomerase FKBP6 (327 aa).

The 90-residue stretch at 54 to 143 (DASVLVKYSG…LFEIELIDFL (90 aa)) folds into the PPIase FKBP-type domain. TPR repeat units lie at residues 171–204 (AATE…LHRR), 219–252 (LLVL…DKRN), and 253–286 (AKAL…QPCN).

Belongs to the FKBP6 family. In terms of assembly, interacts with HSP72/HSPA2 and CLTC. Interacts with GAPDH; leading to inhibit GAPDH catalytic activity. Interacts (via TPR repeats) with HSP90. Testis-specific.

Its subcellular location is the cytoplasm. It is found in the cytosol. The protein resides in the nucleus. It localises to the chromosome. Functionally, co-chaperone required during spermatogenesis to repress transposable elements and prevent their mobilization, which is essential for the germline integrity. Acts via the piRNA metabolic process, which mediates the repression of transposable elements during meiosis by forming complexes composed of piRNAs and Piwi proteins and govern the methylation and subsequent repression of transposons. Acts as a co-chaperone via its interaction with HSP90 and is required for the piRNA amplification process, the secondary piRNA biogenesis. May be required together with HSP90 in removal of 16 nucleotide ping-pong by-products from Piwi complexes, possibly facilitating turnover of Piwi complexes. This is Inactive peptidyl-prolyl cis-trans isomerase FKBP6 (Fkbp6) from Mus musculus (Mouse).